The sequence spans 331 residues: L-lactate dehydrogenase A chain (331 aa).

NAD(+) contacts are provided by residues 29–57 and arginine 98; that span reads GMVGMASAISILLKDLCDELAMVDVMEDK. Residues arginine 105, asparagine 137, and arginine 168 each contribute to the substrate site. NAD(+) is bound at residue asparagine 137. Histidine 192 acts as the Proton acceptor in catalysis. Threonine 247 is a binding site for substrate.

This sequence belongs to the LDH/MDH superfamily. LDH family. As to quaternary structure, homotetramer.

It is found in the cytoplasm. The enzyme catalyses (S)-lactate + NAD(+) = pyruvate + NADH + H(+). The protein operates within fermentation; pyruvate fermentation to lactate; (S)-lactate from pyruvate: step 1/1. In terms of biological role, interconverts simultaneously and stereospecifically pyruvate and lactate with concomitant interconversion of NADH and NAD(+). The chain is L-lactate dehydrogenase A chain (ldha) from Dissostichus mawsoni (Antarctic cod).